The sequence spans 426 residues: Serine--tRNA ligase (426 aa).

Residue T233 to E235 participates in L-serine binding. Position 264–266 (R264–E266) interacts with ATP. An L-serine-binding site is contributed by E287. E351–S354 serves as a coordination point for ATP. S387 contacts L-serine.

Belongs to the class-II aminoacyl-tRNA synthetase family. Type-1 seryl-tRNA synthetase subfamily. Homodimer. The tRNA molecule binds across the dimer.

It localises to the cytoplasm. The catalysed reaction is tRNA(Ser) + L-serine + ATP = L-seryl-tRNA(Ser) + AMP + diphosphate + H(+). The enzyme catalyses tRNA(Sec) + L-serine + ATP = L-seryl-tRNA(Sec) + AMP + diphosphate + H(+). It participates in aminoacyl-tRNA biosynthesis; selenocysteinyl-tRNA(Sec) biosynthesis; L-seryl-tRNA(Sec) from L-serine and tRNA(Sec): step 1/1. Catalyzes the attachment of serine to tRNA(Ser). Is also able to aminoacylate tRNA(Sec) with serine, to form the misacylated tRNA L-seryl-tRNA(Sec), which will be further converted into selenocysteinyl-tRNA(Sec). This Pseudomonas savastanoi pv. phaseolicola (strain 1448A / Race 6) (Pseudomonas syringae pv. phaseolicola (strain 1448A / Race 6)) protein is Serine--tRNA ligase.